The sequence spans 290 residues: Agglutinin-2 (290 aa).

A signal peptide spans 1–35 (MAISNTNLLQTKKPISLPLLAFITLFLMLLNRVNS). The N-linked (GlcNAc...) asparagine glycan is linked to asparagine 155. Mn(2+)-binding residues include glutamate 165 and aspartate 167. Ca(2+)-binding residues include aspartate 167, asparagine 171, and aspartate 175. Mn(2+) is bound by residues aspartate 175 and histidine 180. N-linked (GlcNAc...) asparagine glycosylation occurs at asparagine 200.

It belongs to the leguminous lectin family. Homotetramer.

Functionally, mannose/glucose binding bark lectin. In terms of biological role, bark lectins are storage proteins that probably maintain stocks of nitrogen during dormant period. Self-aggregatable molecules that can bind their own carbohydrate side chains. They could also play a role in the plant's defense against phytophagous invertebrates or herbivorous higher animals. This chain is Agglutinin-2, found in Cladrastis kentukea (Yellow wood).